We begin with the raw amino-acid sequence, 229 residues long: RNA pyrophosphohydrolase (229 aa).

One can recognise a Nudix hydrolase domain in the interval 6-149 (GFRPNVGIIL…KRGVYEMALT (144 aa)). The Nudix box motif lies at 38-59 (GGIDRGETPEQAMFRELHEEVG). The disordered stretch occupies residues 168-229 (SGMRPREAHE…QVLHPDPGKA (62 aa)).

This sequence belongs to the Nudix hydrolase family. RppH subfamily. Requires a divalent metal cation as cofactor.

Functionally, accelerates the degradation of transcripts by removing pyrophosphate from the 5'-end of triphosphorylated RNA, leading to a more labile monophosphorylated state that can stimulate subsequent ribonuclease cleavage. The polypeptide is RNA pyrophosphohydrolase (Delftia acidovorans (strain DSM 14801 / SPH-1)).